A 1031-amino-acid polypeptide reads, in one-letter code: Error-prone DNA polymerase (1031 aa).

This sequence belongs to the DNA polymerase type-C family. DnaE2 subfamily.

It localises to the cytoplasm. It carries out the reaction DNA(n) + a 2'-deoxyribonucleoside 5'-triphosphate = DNA(n+1) + diphosphate. Functionally, DNA polymerase involved in damage-induced mutagenesis and translesion synthesis (TLS). It is not the major replicative DNA polymerase. This Pseudomonas savastanoi pv. phaseolicola (strain 1448A / Race 6) (Pseudomonas syringae pv. phaseolicola (strain 1448A / Race 6)) protein is Error-prone DNA polymerase.